The primary structure comprises 468 residues: Ribulose bisphosphate carboxylase large chain (468 aa).

Residue Lys5 is modified to N6,N6,N6-trimethyllysine. Residues Asn114 and Thr164 each contribute to the substrate site. Lys166 functions as the Proton acceptor in the catalytic mechanism. A substrate-binding site is contributed by Lys168. Mg(2+) contacts are provided by Lys192, Asp194, and Glu195. The residue at position 192 (Lys192) is an N6-carboxylysine. His285 (proton acceptor) is an active-site residue. Residues Arg286, His318, and Ser370 each coordinate substrate.

It belongs to the RuBisCO large chain family. Type I subfamily. As to quaternary structure, heterohexadecamer of 8 large chains and 8 small chains; disulfide-linked. The disulfide link is formed within the large subunit homodimers. Requires Mg(2+) as cofactor. Post-translationally, the disulfide bond which can form in the large chain dimeric partners within the hexadecamer appears to be associated with oxidative stress and protein turnover.

It is found in the plastid. The protein localises to the chloroplast. It carries out the reaction 2 (2R)-3-phosphoglycerate + 2 H(+) = D-ribulose 1,5-bisphosphate + CO2 + H2O. The enzyme catalyses D-ribulose 1,5-bisphosphate + O2 = 2-phosphoglycolate + (2R)-3-phosphoglycerate + 2 H(+). Functionally, ruBisCO catalyzes two reactions: the carboxylation of D-ribulose 1,5-bisphosphate, the primary event in carbon dioxide fixation, as well as the oxidative fragmentation of the pentose substrate in the photorespiration process. Both reactions occur simultaneously and in competition at the same active site. In Tecoma stans (Yellow bells), this protein is Ribulose bisphosphate carboxylase large chain.